The sequence spans 378 residues: Spermidine/putrescine import ATP-binding protein PotA (378 aa).

Residues 18 to 248 (VQLAGIRKCF…PKNLFVAGFI (231 aa)) enclose the ABC transporter domain. An ATP-binding site is contributed by 50-57 (GPSGCGKT).

It belongs to the ABC transporter superfamily. Spermidine/putrescine importer (TC 3.A.1.11.1) family. The complex is composed of two ATP-binding proteins (PotA), two transmembrane proteins (PotB and PotC) and a solute-binding protein (PotD).

The protein localises to the cell inner membrane. The catalysed reaction is ATP + H2O + polyamine-[polyamine-binding protein]Side 1 = ADP + phosphate + polyamineSide 2 + [polyamine-binding protein]Side 1.. In terms of biological role, part of the ABC transporter complex PotABCD involved in spermidine/putrescine import. Responsible for energy coupling to the transport system. The chain is Spermidine/putrescine import ATP-binding protein PotA from Escherichia coli O1:K1 / APEC.